The primary structure comprises 352 residues: MTIAVGRAPVERGWFDVLDDWLKRDRFVFIGWSGLLLFPCAFMALGGWLTGTTFVTSWYTHGLASSYLEGANFLTVAVSSPADAFGHSLLFLWGPEAQGNLTRWFQIGGLWPFVALHGAFGLIGFMLRQFEISRLVGIRPYNAIAFSGPIAVFVSVFLMYPLGQSSWFFAPSFGVAGIFRFILFLQGFHNWTLNPFHMMGVAGILGGALLCAIHGATVENTLFEDGEDSNTFRAFEPTQAEETYSMVTANRFWSQIFGIAFSNKRWLHFFMLFVPVTGLWMSSVGIVGLALNLRAYDFVSQELRAAEDPEFETFYTKNILLNEGMRAWMAPQDQPHENFIFPEEVLPRGNAL.

The Cytoplasmic portion of the chain corresponds to Met-1–Gly-31. A helical transmembrane segment spans residues Trp-32 to Thr-53. The Lumenal, thylakoid segment spans residues Phe-54 to Gly-108. Residues Gly-109 to Glu-131 form a helical membrane-spanning segment. His-117 is a chlorophyll a binding site. Residue Gln-129 participates in pheophytin a binding. At Ile-132–Pro-140 the chain is on the cytoplasmic side. A helical transmembrane segment spans residues Tyr-141–Leu-162. Asn-142 is a binding site for pheophytin a. Residues Gly-163 to Asn-190 are Lumenal, thylakoid-facing. The chain crosses the membrane as a helical span at residues Trp-191–Thr-217. His-197 lines the chlorophyll a pocket. A plastoquinone contacts are provided by His-214 and Phe-261. His-214 serves as a coordination point for Fe cation. Over Val-218 to Arg-265 the chain is Cytoplasmic. The helical transmembrane segment at Trp-266 to Gly-288 threads the bilayer. His-268 lines the Fe cation pocket. The Lumenal, thylakoid portion of the chain corresponds to Leu-289–Leu-352.

The protein belongs to the reaction center PufL/M/PsbA/D family. In terms of assembly, PSII is composed of 1 copy each of membrane proteins PsbA, PsbB, PsbC, PsbD, PsbE, PsbF, PsbH, PsbI, PsbJ, PsbK, PsbL, PsbM, PsbT, PsbX, PsbY, PsbZ, Psb30/Ycf12, peripheral proteins PsbO, CyanoQ (PsbQ), PsbU, PsbV and a large number of cofactors. It forms dimeric complexes. It depends on The D1/D2 heterodimer binds P680, chlorophylls that are the primary electron donor of PSII, and subsequent electron acceptors. It shares a non-heme iron and each subunit binds pheophytin, quinone, additional chlorophylls, carotenoids and lipids. There is also a Cl(-1) ion associated with D1 and D2, which is required for oxygen evolution. The PSII complex binds additional chlorophylls, carotenoids and specific lipids. as a cofactor.

It localises to the cellular thylakoid membrane. It carries out the reaction 2 a plastoquinone + 4 hnu + 2 H2O = 2 a plastoquinol + O2. Functionally, photosystem II (PSII) is a light-driven water:plastoquinone oxidoreductase that uses light energy to abstract electrons from H(2)O, generating O(2) and a proton gradient subsequently used for ATP formation. It consists of a core antenna complex that captures photons, and an electron transfer chain that converts photonic excitation into a charge separation. The D1/D2 (PsbA/PsbD) reaction center heterodimer binds P680, the primary electron donor of PSII as well as several subsequent electron acceptors. D2 is needed for assembly of a stable PSII complex. This chain is Photosystem II D2 protein, found in Synechocystis sp. (strain ATCC 27184 / PCC 6803 / Kazusa).